A 422-amino-acid polypeptide reads, in one-letter code: UDP-N-acetylglucosamine 1-carboxyvinyltransferase (422 aa).

22-23 contributes to the phosphoenolpyruvate binding site; the sequence is KN. R92 is a binding site for UDP-N-acetyl-alpha-D-glucosamine. C116 serves as the catalytic Proton donor. C116 carries the post-translational modification 2-(S-cysteinyl)pyruvic acid O-phosphothioketal. UDP-N-acetyl-alpha-D-glucosamine is bound by residues 121–125, D307, and I329; that span reads RPVDQ.

It belongs to the EPSP synthase family. MurA subfamily.

It is found in the cytoplasm. It catalyses the reaction phosphoenolpyruvate + UDP-N-acetyl-alpha-D-glucosamine = UDP-N-acetyl-3-O-(1-carboxyvinyl)-alpha-D-glucosamine + phosphate. Its pathway is cell wall biogenesis; peptidoglycan biosynthesis. Cell wall formation. Adds enolpyruvyl to UDP-N-acetylglucosamine. In Psychrobacter arcticus (strain DSM 17307 / VKM B-2377 / 273-4), this protein is UDP-N-acetylglucosamine 1-carboxyvinyltransferase.